Here is a 1235-residue protein sequence, read N- to C-terminus: Phosphorylase b kinase regulatory subunit alpha, liver isoform (1235 aa).

Ser-697, Ser-731, and Ser-737 each carry phosphoserine. The tract at residues 808-838 is calmodulin-binding; it reads LSELYGKAGLNQEWGLIRYISGLLRKKVEVL. Low complexity predominate over residues 976 to 986; that stretch reads SSASSPAISIH. Residues 976–1002 are disordered; it reads SSASSPAISIHEVGHTGVTKTERSGIN. 3 positions are modified to phosphoserine: Ser-984, Ser-1016, and Ser-1044. The segment covering 1032–1053 has biased composition (low complexity); that stretch reads AYSKSVRSSTPSSPTGTSSSDS. The interval 1032 to 1060 is disordered; that stretch reads AYSKSVRSSTPSSPTGTSSSDSGGHHISW. Residues 1059–1099 form a calmodulin-binding region; that stretch reads SWGERQGQWLRRRRLDGAINRVPVGFYQRVWKILQKCHGLS. Residue Cys-1232 is the site of S-farnesyl cysteine attachment.

It belongs to the phosphorylase b kinase regulatory chain family. In terms of assembly, hexadecamer of 4 heterotetramers, each composed of alpha, beta, gamma, and delta subunits. Alpha (PHKA1 or PHKA2) and beta (PHKB) are regulatory subunits, gamma (PHKG1 or PHKG2) is the catalytic subunit, and delta is calmodulin. Although the final Cys may be farnesylated, the terminal tripeptide is probably not removed, and the C-terminus is not methylated. As to expression, predominantly expressed in liver and other non-muscle tissues.

The protein resides in the cell membrane. It functions in the pathway glycan biosynthesis; glycogen metabolism. By phosphorylation of various serine residues and by calcium. Phosphorylase b kinase catalyzes the phosphorylation of serine in certain substrates, including troponin I. The alpha chain may bind calmodulin. The polypeptide is Phosphorylase b kinase regulatory subunit alpha, liver isoform (PHKA2) (Oryctolagus cuniculus (Rabbit)).